A 295-amino-acid polypeptide reads, in one-letter code: Tyrosine recombinase XerC (295 aa).

A Core-binding (CB) domain is found at 1–84 (MTLEEQFLSY…SLKSFYRLLT (84 aa)). In terms of domain architecture, Tyr recombinase spans 105–289 (KLPEFFYQDE…SMQHLTAEYR (185 aa)). Active-site residues include Arg-145, Lys-169, His-241, Arg-244, and His-267. Tyr-276 serves as the catalytic O-(3'-phospho-DNA)-tyrosine intermediate.

Belongs to the 'phage' integrase family. XerC subfamily. Forms a cyclic heterotetrameric complex composed of two molecules of XerC and two molecules of XerD.

The protein resides in the cytoplasm. Functionally, site-specific tyrosine recombinase, which acts by catalyzing the cutting and rejoining of the recombining DNA molecules. The XerC-XerD complex is essential to convert dimers of the bacterial chromosome into monomers to permit their segregation at cell division. It also contributes to the segregational stability of plasmids. The polypeptide is Tyrosine recombinase XerC (Lactobacillus leichmannii).